A 735-amino-acid chain; its full sequence is MGEFKPPLPQGAGYAIVLGLGAVFAGMMVLTTYLLKRYQKEIITAEEFTTAGRSVKTGLVAAAVVSSWIWCSTLLTSSTKEYADGIFGGYAYAAGACFQIIAFAILAIKTKQMAPNAHTYLELVRTRYGKIGHGCYLFYAIATNILVTSMLLTSGSAVFSDLTGMNTIASCFLLPVGVVVYTLFGGIKATFLTDYMHTCVIIIIVLVFAFKVYATSDVLGSPGKVYDLVREAAKRHPVDGNYQGEYMTMTSKSAGILLIINLIGNFGTVFLDNGYWNKAISASPAASLKAYAIGGLAWFAVPSLISLTMGLACLAVETSPNFPTYPDPLTSFQANSGLVLPAAAIAIMGKGGAVASLLMIFMAVTSAMSAELIAVSSVFTYDIYREYIDPRASGKKLIYTSHVACIFFGLAMSGFSVGLYYGGISMGYIYEMMGIIISSAVLPVVLTLCSKDMNLVAAVVSPILGTGLAIMSWLVCTKSLYKELTVDTTFMDYPMLTGNLVALLSPAIFIPILTYVFKPQNFDWEKMKDITRVDETAELVQADPDIQLYDAEANDKEQEEETNSLVSDSEKNDVRVNNEKLIEPNLGVVISNAIFQEDDTQLQNELDEEQRELARGLKIAYFLCVFFALAFLVVWPMPMYGSKYIFSKKFFTGWVVVMIIWLFFSAFAVCIYPLWEGRHGIYTTLRGLYWDLSGQTYKLREWQNSNPQDLHVVTSQISARAHRQSSHFGQVDEII.

The Cytoplasmic portion of the chain corresponds to 1–14; that stretch reads MGEFKPPLPQGAGY. A helical transmembrane segment spans residues 15–35; that stretch reads AIVLGLGAVFAGMMVLTTYLL. Residues 36–85 lie on the Extracellular side of the membrane; sequence KRYQKEIITAEEFTTAGRSVKTGLVAAAVVSSWIWCSTLLTSSTKEYADG. A helical transmembrane segment spans residues 86-106; it reads IFGGYAYAAGACFQIIAFAIL. Over 107-130 the chain is Cytoplasmic; it reads AIKTKQMAPNAHTYLELVRTRYGK. Residues 131–151 form a helical membrane-spanning segment; sequence IGHGCYLFYAIATNILVTSML. Residues 152–166 lie on the Extracellular side of the membrane; sequence LTSGSAVFSDLTGMN. The helical transmembrane segment at 167 to 187 threads the bilayer; sequence TIASCFLLPVGVVVYTLFGGI. Topologically, residues 188 to 189 are cytoplasmic; sequence KA. The helical transmembrane segment at 190–210 threads the bilayer; that stretch reads TFLTDYMHTCVIIIIVLVFAF. Residues 211 to 253 are Extracellular-facing; that stretch reads KVYATSDVLGSPGKVYDLVREAAKRHPVDGNYQGEYMTMTSKS. The helical transmembrane segment at 254–274 threads the bilayer; that stretch reads AGILLIINLIGNFGTVFLDNG. Topologically, residues 275 to 295 are cytoplasmic; it reads YWNKAISASPAASLKAYAIGG. A helical transmembrane segment spans residues 296–316; the sequence is LAWFAVPSLISLTMGLACLAV. Residues 317–343 lie on the Extracellular side of the membrane; sequence ETSPNFPTYPDPLTSFQANSGLVLPAA. Residues 344 to 364 form a helical membrane-spanning segment; that stretch reads AIAIMGKGGAVASLLMIFMAV. At 365-403 the chain is on the cytoplasmic side; that stretch reads TSAMSAELIAVSSVFTYDIYREYIDPRASGKKLIYTSHV. A helical transmembrane segment spans residues 404-424; it reads ACIFFGLAMSGFSVGLYYGGI. Residue Ser425 is a topological domain, extracellular. A helical transmembrane segment spans residues 426–446; the sequence is MGYIYEMMGIIISSAVLPVVL. The Cytoplasmic segment spans residues 447–454; that stretch reads TLCSKDMN. Residues 455–475 form a helical membrane-spanning segment; the sequence is LVAAVVSPILGTGLAIMSWLV. The Extracellular segment spans residues 476–496; the sequence is CTKSLYKELTVDTTFMDYPML. A helical transmembrane segment spans residues 497–517; that stretch reads TGNLVALLSPAIFIPILTYVF. The Cytoplasmic segment spans residues 518–618; that stretch reads KPQNFDWEKM…EQRELARGLK (101 aa). The tract at residues 553-572 is disordered; the sequence is ANDKEQEEETNSLVSDSEKN. A helical transmembrane segment spans residues 619-639; sequence IAYFLCVFFALAFLVVWPMPM. Over 640–650 the chain is Extracellular; it reads YGSKYIFSKKF. The chain crosses the membrane as a helical span at residues 651–671; it reads FTGWVVVMIIWLFFSAFAVCI. The Cytoplasmic segment spans residues 672–735; sequence YPLWEGRHGI…SHFGQVDEII (64 aa).

The protein belongs to the sodium:solute symporter (SSF) (TC 2.A.21) family. May polymerize.

Its subcellular location is the membrane. Required for active transport of urea. This Saccharomyces cerevisiae (strain ATCC 204508 / S288c) (Baker's yeast) protein is Urea active transporter (DUR3).